Here is a 171-residue protein sequence, read N- to C-terminus: 3-hydroxydecanoyl-[acyl-carrier-protein] dehydratase (171 aa).

His70 is a catalytic residue.

It belongs to the thioester dehydratase family. FabA subfamily. In terms of assembly, homodimer.

It localises to the cytoplasm. It catalyses the reaction a (3R)-hydroxyacyl-[ACP] = a (2E)-enoyl-[ACP] + H2O. The enzyme catalyses (3R)-hydroxydecanoyl-[ACP] = (2E)-decenoyl-[ACP] + H2O. The catalysed reaction is (2E)-decenoyl-[ACP] = (3Z)-decenoyl-[ACP]. It participates in lipid metabolism; fatty acid biosynthesis. In terms of biological role, necessary for the introduction of cis unsaturation into fatty acids. Catalyzes the dehydration of (3R)-3-hydroxydecanoyl-ACP to E-(2)-decenoyl-ACP and then its isomerization to Z-(3)-decenoyl-ACP. Can catalyze the dehydratase reaction for beta-hydroxyacyl-ACPs with saturated chain lengths up to 16:0, being most active on intermediate chain length. The sequence is that of 3-hydroxydecanoyl-[acyl-carrier-protein] dehydratase from Pseudomonas syringae pv. tomato (strain ATCC BAA-871 / DC3000).